Reading from the N-terminus, the 508-residue chain is DDB1- and CUL4-associated factor 10 (508 aa).

The disordered stretch occupies residues 1-75 (MSSGHPSDNE…GSASGSGCRG (75 aa)). Residues 7 to 17 (SDNEEPRADLL) show a composition bias toward basic and acidic residues. Residues 18–32 (REEEEEEEEEEDSDE) show a composition bias toward acidic residues. The segment covering 63 to 75 (GGTGSASGSGCRG) has biased composition (gly residues). WD repeat units lie at residues 126–165 (QTHGAVFNLEYSPDGSVLTVACEQTEVLLFDPVSSRHIKT), 169–207 (AHEDCVNNIRFLDNRLFATCSDDTTIALWDLRKLNSKVC), 211–250 (GHASWVKNIEYDTHTRLLVTSGFDGNVITWDTNRFTEDGC), and 256–295 (FHTRYLMRMRLTPDCSKMLISTSSGYLLILHDLDLTQSLE). Residues 307–343 (PPLSTEGSSAGSRSGGPRHTIDNKNHPHREGLSPRNS) are disordered. The span at 325–338 (HTIDNKNHPHREGL) shows a compositional bias: basic and acidic residues. 3 WD repeats span residues 356–396 (DRGN…QEGA), 419–457 (VGRGYIKELCFSPDGRLICSPYGYGVRLLAFDENCAELV), and 475–508 (SHSDVVLTSKFSPTHCQFASGCLSGRVALYQPHF).

This sequence belongs to the WD repeat DCAF10 family.

It participates in protein modification; protein ubiquitination. May function as a substrate receptor for CUL4-DDB1 E3 ubiquitin-protein ligase complex. This is DDB1- and CUL4-associated factor 10 (dcaf10) from Danio rerio (Zebrafish).